A 62-amino-acid polypeptide reads, in one-letter code: Insect toxin BsIT4 (62 aa).

In terms of domain architecture, LCN-type CS-alpha/beta spans 1-62 (DGYIKGNKGC…WLYAATNTCG (62 aa)). Cystine bridges form between cysteine 10/cysteine 61, cysteine 14/cysteine 35, cysteine 21/cysteine 42, and cysteine 25/cysteine 44.

The protein belongs to the long (4 C-C) scorpion toxin superfamily. Sodium channel inhibitor family. Beta subfamily. Expressed by the venom gland.

The protein localises to the secreted. Functionally, depressant insect beta-toxins cause a transient contraction paralysis followed by a slow flaccid paralysis. They bind voltage-independently at site-4 of sodium channels (Nav) and shift the voltage of activation toward more negative potentials thereby affecting sodium channel activation and promoting spontaneous and repetitive firing. This toxin is active only on insects. This is Insect toxin BsIT4 from Hottentotta tamulus sindicus (Scorpion).